The chain runs to 575 residues: uncharacterized protein (575 aa).

A signal peptide spans 1 to 28 (MSNLLWKSLVVSPAVLGATLLVSSAAIA). Residues 87–151 (SVSQFSDVQP…DRVNELIATA (65 aa)) form the SLH domain. Positions 158 to 196 (KQDLATLQRLQEEFSAELATLRGRVDALEARTAELEANQ) form a coiled coil.

This sequence belongs to the OprB family.

This is an uncharacterized protein from Nostoc sp. (strain PCC 7120 / SAG 25.82 / UTEX 2576).